The primary structure comprises 116 residues: Large ribosomal subunit protein bL17 (116 aa).

The protein belongs to the bacterial ribosomal protein bL17 family. As to quaternary structure, part of the 50S ribosomal subunit. Contacts protein L32.

In Microcystis aeruginosa (strain NIES-843 / IAM M-2473), this protein is Large ribosomal subunit protein bL17.